A 547-amino-acid chain; its full sequence is MTLTKWALPLFFLFFYLLPLDQRPLWSPDENRYAEISREMVSTGDWVVPHFLGLRYFEKPIAGYWFNSISQQLFGDTNFAVRFASAAATGLSALLIFWFALQLWQCRRKAFLASLIYLSLLIVYGIGTYSVLDAMVTLWLNAAMVSFYIIRKEGSLGSRIGGYLLFGLACGMGFLTKGFIALAVPVVVIVPYVIYQRRLLELVRFGPLAILSAVLLAAPWAIAVHLREPDYWHYFFWVEHIQRFAADNAQHKAPFWYYLPMGLLGTLPWLGLLPGALRKGWQERKISPETLYLLAWVILPLLFFSIAKGKLLTYILPCFAPLAMLMAANAVDLLKEGKERAFKVNAWLNGLFGLICLVVLAVLAFSPSHAVYGEEDQGALAVAMVIFAGWSLLGFIQLKEVSRRWTLSALCPMVLAIGLPWALPQSLIDSKLPERFIEANQAVLMKSGTLLANDVGLASSLAWGTQRSEINLFDSKGEVHYGLGYPDAAGRYVARADFPAWLEQARKNGQVALLMKTDRDGNTGPVPTADETIVSHRLTLLIYHGAQ.

The next 10 helical transmembrane spans lie at 83-103, 111-131, 174-194, 205-225, 253-273, 286-306, 311-331, 346-366, 378-398, and 408-428; these read FASA…ALQL, FLAS…TYSV, FLTK…PYVI, FGPL…IAVH, APFW…LGLL, ISPE…FFSI, LLTY…ANAV, AWLN…LAFS, GALA…FIQL, and SALC…QSLI.

This sequence belongs to the glycosyltransferase 83 family.

Its subcellular location is the cell inner membrane. It catalyses the reaction 4-amino-4-deoxy-alpha-L-arabinopyranosyl di-trans,octa-cis-undecaprenyl phosphate + lipid IVA = lipid IIA + di-trans,octa-cis-undecaprenyl phosphate.. Its pathway is lipopolysaccharide metabolism; 4-amino-4-deoxy-beta-L-arabinose-lipid A biosynthesis. Catalyzes the transfer of the L-Ara4N moiety of the glycolipid undecaprenyl phosphate-alpha-L-Ara4N to lipid A. The modified arabinose is attached to lipid A and is required for resistance to polymyxin and cationic antimicrobial peptides. This is Undecaprenyl phosphate-alpha-4-amino-4-deoxy-L-arabinose arabinosyl transferase from Aeromonas hydrophila subsp. hydrophila (strain ATCC 7966 / DSM 30187 / BCRC 13018 / CCUG 14551 / JCM 1027 / KCTC 2358 / NCIMB 9240 / NCTC 8049).